Consider the following 218-residue polypeptide: UPF0502 protein Geob_1184 (218 aa).

The protein belongs to the UPF0502 family.

This Geotalea daltonii (strain DSM 22248 / JCM 15807 / FRC-32) (Geobacter daltonii) protein is UPF0502 protein Geob_1184.